We begin with the raw amino-acid sequence, 64 residues long: Large ribosomal subunit protein eL37 (64 aa).

Zn(2+) contacts are provided by C20, C23, C35, and C38. The segment at 20–38 (CRRCGRRAFHVRKKVCAAC) adopts a C4-type zinc-finger fold.

It belongs to the eukaryotic ribosomal protein eL37 family. Requires Zn(2+) as cofactor.

Binds to the 23S rRNA. The chain is Large ribosomal subunit protein eL37 from Methanococcus maripaludis (strain DSM 14266 / JCM 13030 / NBRC 101832 / S2 / LL).